Here is a 682-residue protein sequence, read N- to C-terminus: Kinesin-like protein KIF2A (682 aa).

Positions 1 to 192 are globular; that stretch reads MVTSLNEDSE…LDYRPLTTSD (192 aa). The disordered stretch occupies residues 39-129; it reads LAPDEEIDPG…GKKDFGLASR (91 aa). The span at 99-115 shows a compositional bias: polar residues; it reads IEQSASRQQNGSVSDIS. The Kinesin motor domain maps to 198 to 528; sequence RICVCVRKRP…LRYANRVKEL (331 aa). Position 288-295 (288-295) interacts with ATP; the sequence is GQTGSGKT. A coiled-coil region spans residues 638–673; sequence QLEAILEKKIDILTELRDKVKSFRAALQEEEHASKQ.

It belongs to the TRAFAC class myosin-kinesin ATPase superfamily. Kinesin family. MCAK/KIF2 subfamily. In terms of assembly, interacts with aurka and plk1. Post-translationally, phosphorylation by plk1 promotes location at spindle microtubules and spindle poles, and enhances its microtubule depolymerization activity. Phosphorylation by AURKA interferes with location at spindle microtubules and spindle poles, and inhibits its microtubule depolymerization activity.

Its subcellular location is the cytoplasm. It localises to the cytoskeleton. It is found in the microtubule organizing center. The protein localises to the centrosome. The protein resides in the spindle pole. Its subcellular location is the spindle. Its function is as follows. Plus end-directed microtubule-dependent motor. May regulate microtubule dynamics during axonal growth. Required for normal progression through mitosis. Required for normal congress of chromosomes at the metaphase plate. Required for normal spindle dynamics during mitosis. Promotes spindle turnover. Implicated in formation of bipolar mitotic spindles Has microtubule depolymerization activity. The chain is Kinesin-like protein KIF2A (kif2a) from Xenopus laevis (African clawed frog).